We begin with the raw amino-acid sequence, 334 residues long: Ribosomal RNA small subunit methyltransferase C (334 aa).

It belongs to the methyltransferase superfamily. RsmC family. As to quaternary structure, monomer.

It localises to the cytoplasm. It carries out the reaction guanosine(1207) in 16S rRNA + S-adenosyl-L-methionine = N(2)-methylguanosine(1207) in 16S rRNA + S-adenosyl-L-homocysteine + H(+). Specifically methylates the guanine in position 1207 of 16S rRNA in the 30S particle. The protein is Ribosomal RNA small subunit methyltransferase C of Idiomarina loihiensis (strain ATCC BAA-735 / DSM 15497 / L2-TR).